The following is a 118-amino-acid chain: NADH-quinone oxidoreductase subunit A (118 aa).

A run of 3 helical transmembrane segments spans residues 5–25 (FAAV…MMLM), 61–81 (FLYA…FPWA), and 90–110 (FAFI…WYAW).

Belongs to the complex I subunit 3 family. In terms of assembly, NDH-1 is composed of 14 different subunits. Subunits NuoA, H, J, K, L, M, N constitute the membrane sector of the complex.

It localises to the cell membrane. The enzyme catalyses a quinone + NADH + 5 H(+)(in) = a quinol + NAD(+) + 4 H(+)(out). Its function is as follows. NDH-1 shuttles electrons from NADH, via FMN and iron-sulfur (Fe-S) centers, to quinones in the respiratory chain. The immediate electron acceptor for the enzyme in this species is believed to be a menaquinone. Couples the redox reaction to proton translocation (for every two electrons transferred, four hydrogen ions are translocated across the cytoplasmic membrane), and thus conserves the redox energy in a proton gradient. This Desulfitobacterium hafniense (strain Y51) protein is NADH-quinone oxidoreductase subunit A.